The primary structure comprises 193 residues: V-type sodium ATPase subunit E (193 aa).

This sequence belongs to the V-ATPase E subunit family. Post-translationally, the N-terminus is blocked.

In terms of biological role, involved in ATP-driven sodium extrusion. The sequence is that of V-type sodium ATPase subunit E (ntpE) from Enterococcus hirae (strain ATCC 9790 / DSM 20160 / JCM 8729 / LMG 6399 / NBRC 3181 / NCIMB 6459 / NCDO 1258 / NCTC 12367 / WDCM 00089 / R).